The chain runs to 1567 residues: ABC multidrug transporter MDR1 (1567 aa).

Pro residues predominate over residues 1–11 (MASQPPQPPSG). A disordered region spans residues 1–37 (MASQPPQPPSGQPDTQYEEYQSEVITETTNRPTPAAD). Positions 22-32 (SEVITETTNRP) are enriched in polar residues. N-linked (GlcNAc...) asparagine glycans are attached at residues asparagine 149, asparagine 157, and asparagine 356. The region spanning 167–432 (VQYQDTFLSP…FEEMGWYCPP (266 aa)) is the ABC transporter 1 domain. The next 6 membrane-spanning stretches (helical) occupy residues 543-563 (STIA…SLFF), 571-591 (GFFA…LMSI), 636-656 (IPIK…LGGL), 661-681 (AKFF…SAIF), 691-711 (IPQA…YTGF), and 798-818 (LGIL…VSEL). Residues asparagine 819, asparagine 895, and asparagine 912 are each glycosylated (N-linked (GlcNAc...) asparagine). The region spanning 891 to 1134 (FTWRNVTYDI…LLNYFETHGA (244 aa)) is the ABC transporter 2 domain. Residue 927-934 (GVSGAGKT) coordinates ATP. The tract at residues 1172 to 1202 (ESRHVQQELDRIQSETSKRNEGHGQSAEKEP) is disordered. A helical membrane pass occupies residues 1231–1251 (IWGKLLLGLTSALFIGFSFFL). Residue asparagine 1253 is glycosylated (N-linked (GlcNAc...) asparagine). Helical transmembrane passes span 1257–1277 (AGLQ…SSLV), 1305–1325 (VFLL…GIIA), 1345–1365 (ILLL…QMII), 1372–1392 (ETAG…NGVL), and 1498–1518 (GIGW…YYLI).

This sequence belongs to the ABC transporter superfamily. ABCG family. PDR (TC 3.A.1.205) subfamily.

It localises to the cell membrane. It catalyses the reaction voriconazole(in) + ATP + H2O = voriconazole(out) + ADP + phosphate + H(+). It carries out the reaction fluconazole(in) + ATP + H2O = fluconazole(out) + ADP + phosphate + H(+). The enzyme catalyses (R)-miconazole(in) + ATP + H2O = (R)-miconazole(out) + ADP + phosphate + H(+). The catalysed reaction is (S)-miconazole(in) + ATP + H2O = (S)-miconazole(out) + ADP + phosphate + H(+). Its function is as follows. Pleiotropic ABC efflux transporter that may be involved in the modulation susceptibility to a wide range of unrelated cytotoxic compounds. This chain is ABC multidrug transporter MDR1, found in Trichophyton equinum (strain ATCC MYA-4606 / CBS 127.97) (Horse ringworm fungus).